The following is a 494-amino-acid chain: Cytochrome P450 monooxygenase acrF (494 aa).

Heme is bound at residue cysteine 420.

Belongs to the cytochrome P450 family. It depends on heme as a cofactor.

It functions in the pathway secondary metabolite biosynthesis. Cytochrome P450 monooxygenase; part of the cluster that mediates the biosynthesis of acurin A, a highly reduced polyketide coupled to a serine via a peptide bond. The activities of the highly reducing polyketide synthase acrA and the nonribosomal peptide synthetase acrB are collectively responsible for the synthesis of the acurin A core structure with a heptaketide backbone produced by acrA covalently fused to a L-serine by acrB. After the formation of the PK-NRP hybrid product, it is detached from acrB by reductive release to set up the formation of the lactam ring by aldol condensation. The hydrolyase acrC then catalyzes water loss to generate a double bond in the ring. This double bond is probably reduced, which is followed by three oxidations at C-22 to generate the carboxylic acid moiety, involving probably the FAD-binding monooxygenase acrE and the cytochrome P450 monooxygenases acrD and acrF. Finally, a last methylation step performed by the O-methyltransferase acrG leads to the production of acurin A. The sequence is that of Cytochrome P450 monooxygenase acrF from Aspergillus aculeatus (strain ATCC 16872 / CBS 172.66 / WB 5094).